We begin with the raw amino-acid sequence, 643 residues long: Phosphatidylinositol-3,5-bisphosphate 3-phosphatase MTMR2 (643 aa).

Polar residues-rich tracts occupy residues 1 to 12 (MEKSSSCESLGS) and 23 to 40 (DSLS…VHTK). The interval 1 to 56 (MEKSSSCESLGSQPAAARPPSVDSLSSASTSHSENSVHTKSASVVSSDSISTSADN) is disordered. S6 and S9 each carry phosphoserine. Residues 41–55 (SASVVSSDSISTSAD) are compositionally biased toward low complexity. S58 bears the Phosphoserine mark. The GRAM domain maps to 68–139 (NKLAEMEEPP…GVINRVEKIG (72 aa)). Residues 205 to 580 (GWKLYDPLLE…RHLELWVGYY (376 aa)) enclose the Myotubularin phosphatase domain. The a 1,2-diacyl-sn-glycero-3-phospho-(1D-myo-inositol-3,5-bisphosphate) site is built by N330, N355, and I356. A 1,2-diacyl-sn-glycero-3-phospho-(1D-myo-inositol-3-phosphate) contacts are provided by N330, N355, and I356. The active-site Phosphocysteine intermediate is the C417. Residues S418, D419, G420, W421, D422, R423, R459, and R463 each coordinate a 1,2-diacyl-sn-glycero-3-phospho-(1D-myo-inositol-3,5-bisphosphate). Residues S418, D419, G420, W421, D422, and R423 each coordinate a 1,2-diacyl-sn-glycero-3-phospho-(1D-myo-inositol-3-phosphate). R463 is a binding site for a 1,2-diacyl-sn-glycero-3-phospho-(1D-myo-inositol-3-phosphate). Residues 593-627 (IHNRYKELLAKRAELQKKVEELQREISNRSTSSSE) are a coiled coil. Residues 615–643 (QREISNRSTSSSERASSPAQCVTPVQTVV) are disordered. Positions 620 to 631 (NRSTSSSERASS) are enriched in low complexity. Polar residues predominate over residues 632-643 (PAQCVTPVQTVV).

The protein belongs to the protein-tyrosine phosphatase family. Non-receptor class myotubularin subfamily. Homodimer (via coiled-coil domain). Heterotetramer consisting of one MTMR2 dimer and one SBF2/MTMR13 dimer; specifically in peripheral nerves stabilizes SBF2/MTMR13 at the membranes and increases MTMR2 catalytic activity towards phosphatidylinositol 3,5-bisphosphate and to a lesser extent towards phosphatidylinositol 3-phosphate. Heterodimer with SBF1/MTMR5; acts as an adapter for the phosphatase MTMR2 to regulate MTMR2 catalytic activity and subcellular location. Heterodimer with MTMR12. In terms of processing, phosphorylation at Ser-58 decreases MTMR2 localization to endocytic vesicular structures.

It localises to the cytoplasm. The protein resides in the early endosome membrane. It is found in the perinuclear region. The protein localises to the cell projection. Its subcellular location is the axon. It localises to the endosome membrane. It carries out the reaction a 1,2-diacyl-sn-glycero-3-phospho-(1D-myo-inositol-3,5-bisphosphate) + H2O = a 1,2-diacyl-sn-glycero-3-phospho-(1D-myo-inositol-5-phosphate) + phosphate. The enzyme catalyses a 1,2-diacyl-sn-glycero-3-phospho-(1D-myo-inositol-3-phosphate) + H2O = a 1,2-diacyl-sn-glycero-3-phospho-(1D-myo-inositol) + phosphate. It catalyses the reaction 1,2-dioctanoyl-sn-glycero-3-phospho-(1-D-myo-inositol-3-phosphate) + H2O = 1,2-dioctanoyl-sn-glycero-3-phospho-(1D-myo-inositol) + phosphate. The catalysed reaction is 1,2-dioctanoyl-sn-glycero-3-phospho-(1D-myo-inositol-3,5-bisphosphate) + H2O = 1,2-dioctanoyl-sn-glycero-3-phospho-(1D-myo-inositol-5-phosphate) + phosphate. Functionally, lipid phosphatase that specifically dephosphorylates the D-3 position of phosphatidylinositol 3-phosphate and phosphatidylinositol 3,5-bisphosphate, generating phosphatidylinositol and phosphatidylinositol 5-phosphate. Regulates the level of these phosphoinositides critical for various biological processes including autophagy initiation and autophagosome maturation. This chain is Phosphatidylinositol-3,5-bisphosphate 3-phosphatase MTMR2, found in Homo sapiens (Human).